Consider the following 78-residue polypeptide: Acyl carrier protein (78 aa).

The region spanning 1–77 (MALIDEIKDV…DAAKYIEEHK (77 aa)) is the Carrier domain. An O-(pantetheine 4'-phosphoryl)serine modification is found at serine 37.

It belongs to the acyl carrier protein (ACP) family. Post-translationally, 4'-phosphopantetheine is transferred from CoA to a specific serine of apo-ACP by AcpS. This modification is essential for activity because fatty acids are bound in thioester linkage to the sulfhydryl of the prosthetic group.

The protein localises to the secreted. It functions in the pathway lipid metabolism; fatty acid biosynthesis. Its function is as follows. Carrier of the growing fatty acid chain in fatty acid biosynthesis. Has hemolytic activity forming pores approximately 1 nm in diameter into erythrocytes. Is able to induce murine colonic lesions and to disrupt the integrity of epithelial cell monolayers. This is Acyl carrier protein (acpP) from Brachyspira hyodysenteriae (Treponema hyodysenteriae).